A 275-amino-acid polypeptide reads, in one-letter code: Cytochrome c oxidase subunit 3 (275 aa).

The next 7 membrane-spanning stretches (helical) occupy residues 22–42, 52–72, 96–116, 132–152, 173–193, 211–231, and 253–273; these read PWPLLTSFALLILTSAAVMYF, SGALLVGIGLATTVAAMALWF, GVALFIISEVFFFISVFWAFF, PVGIATINPFELPLLNTILLL, AILGTLMTLIFAVLFTICQGI, FFFSTGFHGVHVIIGTLFIAV, and ILYWHFVDVVWLFLFISVYWW.

Belongs to the cytochrome c oxidase subunit 3 family. As to quaternary structure, component of the cytochrome c oxidase (complex IV, CIV), a multisubunit enzyme composed of a catalytic core of 3 subunits and several supernumerary subunits. The complex exists as a monomer or a dimer and forms supercomplexes (SCs) in the inner mitochondrial membrane with ubiquinol-cytochrome c oxidoreductase (cytochrome b-c1 complex, complex III, CIII).

The protein resides in the mitochondrion inner membrane. The enzyme catalyses 4 Fe(II)-[cytochrome c] + O2 + 8 H(+)(in) = 4 Fe(III)-[cytochrome c] + 2 H2O + 4 H(+)(out). In terms of biological role, component of the cytochrome c oxidase, the last enzyme in the mitochondrial electron transport chain which drives oxidative phosphorylation. The respiratory chain contains 3 multisubunit complexes succinate dehydrogenase (complex II, CII), ubiquinol-cytochrome c oxidoreductase (cytochrome b-c1 complex, complex III, CIII) and cytochrome c oxidase (complex IV, CIV), that cooperate to transfer electrons derived from NADH and succinate to molecular oxygen, creating an electrochemical gradient over the inner membrane that drives transmembrane transport and the ATP synthase. Cytochrome c oxidase is the component of the respiratory chain that catalyzes the reduction of oxygen to water. Electrons originating from reduced cytochrome c in the intermembrane space (IMS) are transferred via the dinuclear copper A center (CU(A)) of subunit 2 and heme A of subunit 1 to the active site in subunit 1, a binuclear center (BNC) formed by heme A3 and copper B (CU(B)). The BNC reduces molecular oxygen to 2 water molecules using 4 electrons from cytochrome c in the IMS and 4 protons from the mitochondrial matrix. In Mycosarcoma maydis (Corn smut fungus), this protein is Cytochrome c oxidase subunit 3 (COX3).